A 449-amino-acid polypeptide reads, in one-letter code: Glutamyl-tRNA reductase (449 aa).

Residues 58 to 61, Ser-121, 126 to 128, and Gln-132 contribute to the substrate site; these read TCNR and ETQ. Cys-59 (nucleophile) is an active-site residue. 203–208 is a binding site for NADP(+); it reads GLGEMA.

Belongs to the glutamyl-tRNA reductase family. In terms of assembly, homodimer.

It catalyses the reaction (S)-4-amino-5-oxopentanoate + tRNA(Glu) + NADP(+) = L-glutamyl-tRNA(Glu) + NADPH + H(+). It participates in porphyrin-containing compound metabolism; protoporphyrin-IX biosynthesis; 5-aminolevulinate from L-glutamyl-tRNA(Glu): step 1/2. Its function is as follows. Catalyzes the NADPH-dependent reduction of glutamyl-tRNA(Glu) to glutamate 1-semialdehyde (GSA). This chain is Glutamyl-tRNA reductase, found in Helicobacter pylori (strain J99 / ATCC 700824) (Campylobacter pylori J99).